The sequence spans 329 residues: Dolichyl-diphosphooligosaccharide--protein glycosyltransferase subunit MAGT1 (329 aa).

The first 23 residues, 1-23 (MAGLKGLLFGGILFAMCGGLSEG), serve as a signal peptide directing secretion. Topologically, residues 24–178 (QKKKEMVLSD…DVNIRVIRPP (155 aa)) are extracellular. Residues 41–169 (WASKRPVIRM…LARWVADRTD (129 aa)) form the Thioredoxin domain. N-linked (GlcNAc...) asparagine glycosylation is present at Asn-65. A disulfide bridge connects residues Cys-81 and Cys-84. The chain crosses the membrane as a helical span at residues 179-199 (NYAGPLMLGLLLAVIGGLVYL). The Cytoplasmic portion of the chain corresponds to 200–212 (RRSNLDFLNNKTG). The helical transmembrane segment at 213-233 (WALAALCFVLAMTSGQMWNHI) threads the bilayer. Residues 234–258 (RGPPYAHKNPHTNQVNYIHGSSQAQ) are Extracellular-facing. A helical membrane pass occupies residues 259 to 279 (FVAETHIVLLFNGAVTLGMVL). The Cytoplasmic portion of the chain corresponds to 280 to 294 (LHEAATSDLDVGKRK). Residues 295–315 (IMCIAGITLVVIFFSWLLSVF) traverse the membrane as a helical segment. At 316–329 (RSKYHGYPYSFLMT) the chain is on the extracellular side.

The protein belongs to the OST3/OST6 family. As to quaternary structure, accessory component of the STT3B-containing form of the oligosaccharyltransferase (OST) complex.

It localises to the cell membrane. It is found in the endoplasmic reticulum. The protein localises to the endoplasmic reticulum membrane. It participates in protein modification; protein glycosylation. Functionally, accessory component of the STT3B-containing form of the N-oligosaccharyl transferase (OST) complex which catalyzes the transfer of a high mannose oligosaccharide from a lipid-linked oligosaccharide donor to an asparagine residue within an Asn-X-Ser/Thr consensus motif in nascent polypeptide chains. May be involved in substrate-specific N-glycosylation involving acceptor sites that are near cysteine residues. Could indirectly play a role in Mg(2+) transport in epithelial cells. The sequence is that of Dolichyl-diphosphooligosaccharide--protein glycosyltransferase subunit MAGT1 from Xenopus laevis (African clawed frog).